The primary structure comprises 288 residues: MFSGIGTAIITPFKNGEIDYHALKNFLETQRMVDAIILLGTTGEAPNISIEERDKLIPFVREYFPDKPLIVGVGTNSSHHTMELVKNAEKNKADALLVVTPYYNKPTQIGLYHYYKYISEHTDLEIIIYNVPGRTGVNIAPETVYKLASDCKNITALKEANSSFDQINKVLHLKPETFKVFSGNDDISFQFLASGGNGVISVASNVIPNQMVEMYKNIISGNISNARKIFYTYYPLFKALFIETNPIPVKQALNIMGLIENELRLPLYPANKETKNILEKILKECKII.

Pyruvate is bound at residue Thr-42. The Proton donor/acceptor role is filled by Tyr-129. Lys-158 (schiff-base intermediate with substrate) is an active-site residue. A pyruvate-binding site is contributed by Ile-200.

It belongs to the DapA family. Homotetramer; dimer of dimers.

Its subcellular location is the cytoplasm. It catalyses the reaction L-aspartate 4-semialdehyde + pyruvate = (2S,4S)-4-hydroxy-2,3,4,5-tetrahydrodipicolinate + H2O + H(+). It functions in the pathway amino-acid biosynthesis; L-lysine biosynthesis via DAP pathway; (S)-tetrahydrodipicolinate from L-aspartate: step 3/4. Catalyzes the condensation of (S)-aspartate-beta-semialdehyde [(S)-ASA] and pyruvate to 4-hydroxy-tetrahydrodipicolinate (HTPA). The protein is 4-hydroxy-tetrahydrodipicolinate synthase of Thermosipho melanesiensis (strain DSM 12029 / CIP 104789 / BI429).